Consider the following 626-residue polypeptide: tRNA uridine 5-carboxymethylaminomethyl modification enzyme MnmG (626 aa).

13–18 (GGGHAG) contacts FAD. Residue 273–287 (GPRYCPSIEDKIHRF) coordinates NAD(+).

The protein belongs to the MnmG family. Homodimer. Heterotetramer of two MnmE and two MnmG subunits. FAD serves as cofactor.

The protein resides in the cytoplasm. In terms of biological role, NAD-binding protein involved in the addition of a carboxymethylaminomethyl (cmnm) group at the wobble position (U34) of certain tRNAs, forming tRNA-cmnm(5)s(2)U34. The protein is tRNA uridine 5-carboxymethylaminomethyl modification enzyme MnmG of Acinetobacter baumannii (strain SDF).